Reading from the N-terminus, the 376-residue chain is Putative 12-oxophytodienoate reductase 13 (376 aa).

FMN contacts are provided by residues 25–27 (PLT), A58, and Q99. A substrate-binding site is contributed by 165-168 (HGAH). Residues R217, G301, and 322–323 (GR) contribute to the FMN site.

Belongs to the NADH:flavin oxidoreductase/NADH oxidase family. FMN is required as a cofactor.

Its function is as follows. Putative oxophytodienoate reductase that may be involved in the biosynthesis or metabolism of oxylipin signaling molecules. This is Putative 12-oxophytodienoate reductase 13 (OPR13) from Oryza sativa subsp. japonica (Rice).